Here is a 417-residue protein sequence, read N- to C-terminus: Serine hydroxymethyltransferase (417 aa).

Residues Leu121 and 125 to 127 contribute to the (6S)-5,6,7,8-tetrahydrofolate site; that span reads GHL. Lys229 carries the N6-(pyridoxal phosphate)lysine modification. Position 355 to 357 (355 to 357) interacts with (6S)-5,6,7,8-tetrahydrofolate; sequence SPF.

The protein belongs to the SHMT family. As to quaternary structure, homodimer. It depends on pyridoxal 5'-phosphate as a cofactor.

It localises to the cytoplasm. It catalyses the reaction (6R)-5,10-methylene-5,6,7,8-tetrahydrofolate + glycine + H2O = (6S)-5,6,7,8-tetrahydrofolate + L-serine. The protein operates within one-carbon metabolism; tetrahydrofolate interconversion. Its pathway is amino-acid biosynthesis; glycine biosynthesis; glycine from L-serine: step 1/1. Functionally, catalyzes the reversible interconversion of serine and glycine with tetrahydrofolate (THF) serving as the one-carbon carrier. This reaction serves as the major source of one-carbon groups required for the biosynthesis of purines, thymidylate, methionine, and other important biomolecules. Also exhibits THF-independent aldolase activity toward beta-hydroxyamino acids, producing glycine and aldehydes, via a retro-aldol mechanism. The polypeptide is Serine hydroxymethyltransferase (Xylella fastidiosa (strain 9a5c)).